Reading from the N-terminus, the 153-residue chain is Suppressor of RNA silencing (153 aa).

Residues 1-23 form a C-1 region; sequence MMATFSCVCCGTSTTSTYCGKRC. The interval 1 to 85 is interaction with TGB1; sequence MMATFSCVCC…IVSRFCGQKH (85 aa). The interval 19–47 is basic motif (BM); sequence CGKRCERKHVYSETRNKRLELYKKYLLEP. The C-2 stretch occupies residues 60-85; sequence CGMPCSIAEEACDQLPIVSRFCGQKH. The interaction with replication protein alpha-A stretch occupies residues 86–127; that stretch reads ADLYDSLLKRSEQELLLEFLQKKMQELKLSHIVKMAKLESEV. Residues 92-132 adopt a coiled-coil conformation; sequence LLKRSEQELLLEFLQKKMQELKLSHIVKMAKLESEVNAIRK. Ser-96 carries the phosphoserine modification.

Belongs to the virgaviridae suppressor of RNA silencing family. As to quaternary structure, homooligomer. Interacts (via C-terminus) with replication protein alpha-A. Interacts (via N-terminus) with the movement protein TGB1; this interaction targets gammab-TGB1 at the periphery of chloroplasts and plasmodesmata. Interacts with host autophagy protein ATG7; this interaction disrupts the host ATG7-ATG8 interaction to promote viral infection. Interacts (via BM region) with host STY46; this interaction inhibits the viral infection. In terms of processing, phosphorylated at Ser-96 by a host PKA-like kinase; the phosphorylation at this site seems to suppress host cell death. Post-translationally, serine-phosphorylated by host STY46 kinase.

The protein resides in the host chloroplast envelope. Its subcellular location is the host endoplasmic reticulum. It localises to the host cell junction. It is found in the host plasmodesma. Its function is as follows. Suppressor of RNA-mediated gene silencing, also known as post-transcriptional gene silencing (PTGS), a mechanism of plant viral defense that limits the accumulation of viral RNAs. Promotes viral cell-to-cell long distance movement by enhancing the ATPase activity of TGB1. Enhances RNA helicase activity of replication protein alpha-A. Suppresses autophagy induced by the host as a defense mechanism against viral infection. This chain is Suppressor of RNA silencing, found in Barley stripe mosaic virus (BSMV).